Reading from the N-terminus, the 1247-residue chain is Catenin delta-2 (1247 aa).

3 disordered regions span residues 1–50, 134–238, and 256–309; these read MFAR…TTSA, SGIL…SAFH, and LPAP…KSYS. At serine 7 the chain carries Phosphoserine. Over residues 22 to 50 the composition is skewed to polar residues; the sequence is PSASEKNSSLSPGLNTSNGDGSETETTSA. Positions 49–84 form a coiled coil; that stretch reads SAILASVKEQELQFERLTRELEAERQIVASQLERCK. A compositionally biased stretch (low complexity) spans 149–160; sequence SLLSQSALQLNS. A compositionally biased stretch (polar residues) spans 172 to 207; sequence YHSNQTLALGDTAPSQLPARSTQARAAGQSFSQGTT. At arginine 209 the chain carries Omega-N-methylarginine. Pro residues predominate over residues 218–228; the sequence is PAPPPPPPREP. The residue at position 261 (arginine 261) is an Omega-N-methylarginine. Phosphoserine occurs at positions 264 and 273. The span at 265 to 276 shows a compositional bias: polar residues; it reads PLTTTQGGSPTK. 2 positions are modified to omega-N-methylarginine: arginine 279 and arginine 293. Over residues 296-309 the composition is skewed to polar residues; it reads SPKQSPSRLAKSYS. Residues serine 324, serine 357, serine 412, and serine 458 each carry the phosphoserine modification. The stretch at 391–433 is one ARM 1 repeat; the sequence is GSRASYSSQHGHLAPELRALQSPEHHIDPIYEDRVYQKPPMRS. A disordered region spans residues 429–480; that stretch reads PPMRSLSQSQGDPLPPAHTGTFRTSTAPSSPGVDSVPLQRTGSQHGPQNAAA. Polar residues predominate over residues 466-475; the sequence is LQRTGSQHGP. Position 511 is a phosphoserine (serine 511). Tyrosine 513 carries the post-translational modification Phosphotyrosine. The tract at residues 514-533 is disordered; that stretch reads SKSGPALPPEGTLARSPSID. ARM repeat units follow at residues 537–576, 579–618, 623–663, 679–721, 725–770, 832–872, 904–943, and 997–1040; these read KDPREFGWRDPELPEVIQMLQHQFPSVQSNAAAYLQHLCF, NKIKAEIRRQGGIQLLVDLLDHRMTEVHRSACGALRNLVY, DDNK…NLSS, LTNA…NVSS, EARR…NLSY, PKGI…NLAA, VYIRAAVRKEKGLPILVELLRIDNDRVVCAVATALRNMAL, and MENA…SMWQ. Disordered stretches follow at residues 1064–1131 and 1152–1176; these read TIER…HTSR and APAEDIKQNQVSTQPVPQEPSRKDY. Residues 1072-1081 are compositionally biased toward polar residues; that stretch reads PYSSSRTPSI. Residues serine 1087 and serine 1098 each carry the phosphoserine modification. A compositionally biased stretch (low complexity) spans 1087–1100; that stretch reads SPNNRSASAPASPR. Over residues 1103–1112 the composition is skewed to basic and acidic residues; that stretch reads ISLKERKTDY.

It belongs to the beta-catenin family. Binds to E-cadherin at a juxtamembrane site within the cytoplasmic domain. Binds to PSEN1. Interacts with PDZD2. Interacts (via the extreme C-terminus) with FRMPD2 (via the PDZ 2 domain). Interacts with ZBTB33. Interacts with ARHGEF28. Interacts with CDK5. Interacts with CTNNB1. Interacts with GSK3A and GSK3B. Interacts with DNM2. Interacts with CCDC85B. In terms of processing, O-glycosylated. Post-translationally, phosphorylated by CDK5. Phosphorylated by GSK3B. Expressed in neurons and glial cells. Isoform 2 was found to be the most predominant isoform in various brain regions. Expressed at neuromuscular junctions.

The protein localises to the nucleus. It localises to the cell junction. Its subcellular location is the adherens junction. The protein resides in the cell projection. It is found in the dendrite. The protein localises to the perikaryon. Has a critical role in neuronal development, particularly in the formation and/or maintenance of dendritic spines and synapses. Involved in the regulation of canonical Wnt signaling. It probably acts on beta-catenin turnover, facilitating beta-catenin interaction with GSK3B, phosphorylation, ubiquitination and degradation. May be involved in neuronal cell adhesion and tissue morphogenesis and integrity by regulating adhesion molecules. Functions as a transcriptional activator when bound to ZBTB33. The chain is Catenin delta-2 (Ctnnd2) from Mus musculus (Mouse).